Here is a 229-residue protein sequence, read N- to C-terminus: Large ribosomal subunit protein uL1 (229 aa).

This sequence belongs to the universal ribosomal protein uL1 family. As to quaternary structure, part of the 50S ribosomal subunit.

Its function is as follows. Binds directly to 23S rRNA. The L1 stalk is quite mobile in the ribosome, and is involved in E site tRNA release. In terms of biological role, protein L1 is also a translational repressor protein, it controls the translation of the L11 operon by binding to its mRNA. The protein is Large ribosomal subunit protein uL1 of Clostridium tetani (strain Massachusetts / E88).